A 450-amino-acid polypeptide reads, in one-letter code: tRNA modification GTPase MnmE (450 aa).

3 residues coordinate (6S)-5-formyl-5,6,7,8-tetrahydrofolate: Arg23, Glu79, and Lys118. The 161-residue stretch at 214–374 (GITLILVGKP…LKDHILAKVG (161 aa)) folds into the TrmE-type G domain. Residue Asn224 participates in K(+) binding. Residues 224-229 (NAGKSS), 243-249 (TSIAGTT), and 268-271 (DTAG) contribute to the GTP site. Ser228 is a Mg(2+) binding site. 3 residues coordinate K(+): Thr243, Ile245, and Thr248. Residue Thr249 coordinates Mg(2+). (6S)-5-formyl-5,6,7,8-tetrahydrofolate is bound at residue Lys450.

Belongs to the TRAFAC class TrmE-Era-EngA-EngB-Septin-like GTPase superfamily. TrmE GTPase family. Homodimer. Heterotetramer of two MnmE and two MnmG subunits. The cofactor is K(+).

The protein resides in the cytoplasm. Its function is as follows. Exhibits a very high intrinsic GTPase hydrolysis rate. Involved in the addition of a carboxymethylaminomethyl (cmnm) group at the wobble position (U34) of certain tRNAs, forming tRNA-cmnm(5)s(2)U34. The chain is tRNA modification GTPase MnmE from Francisella philomiragia subsp. philomiragia (strain ATCC 25017 / CCUG 19701 / FSC 153 / O#319-036).